Here is a 407-residue protein sequence, read N- to C-terminus: Phosphopentomutase (407 aa).

Mn(2+) is bound by residues Asp10, Asp306, His311, Asp347, His348, and His359.

It belongs to the phosphopentomutase family. It depends on Mn(2+) as a cofactor.

It is found in the cytoplasm. It carries out the reaction 2-deoxy-alpha-D-ribose 1-phosphate = 2-deoxy-D-ribose 5-phosphate. The catalysed reaction is alpha-D-ribose 1-phosphate = D-ribose 5-phosphate. The protein operates within carbohydrate degradation; 2-deoxy-D-ribose 1-phosphate degradation; D-glyceraldehyde 3-phosphate and acetaldehyde from 2-deoxy-alpha-D-ribose 1-phosphate: step 1/2. Functionally, isomerase that catalyzes the conversion of deoxy-ribose 1-phosphate (dRib-1-P) and ribose 1-phosphate (Rib-1-P) to deoxy-ribose 5-phosphate (dRib-5-P) and ribose 5-phosphate (Rib-5-P), respectively. The sequence is that of Phosphopentomutase from Serratia proteamaculans (strain 568).